The chain runs to 708 residues: Probable inactive lysine-specific demethylase JMJ19 (708 aa).

A disordered region spans residues 35-59 (VPRDKESPRSVSRQEQTTGFGTDDK). The segment covering 43-54 (RSVSRQEQTTGF) has biased composition (polar residues). The JmjN domain occupies 108–149 (APVFNPTEEEFRDTLSYISSLRDRAEPYGICCVVPPPSWKPP). The JmjC domain occupies 293–454 (SSGWNLNSTA…HGDIAVQVNQ (162 aa)). Zn(2+) contacts are provided by Cys544, Cys547, Cys558, Cys560, Cys567, His570, Cys575, and Cys577. Residues 544–581 (CCVCLGDLYLSAVNCSCSANRYSCLNHMRKLCACPCDR) form an RING-type; degenerate zinc finger. Positions 646-653 (TRKDVAAG) match the Nuclear localization signal motif. A compositionally biased stretch (basic and acidic residues) spans 678–694 (AKETLESCSKKSNRPCD). The segment at 678–708 (AKETLESCSKKSNRPCDNDSSEANAPKKQKQ) is disordered.

The protein belongs to the JARID1 histone demethylase family. In terms of tissue distribution, expressed in inflorescences, roots, siliques, leaves and stems.

The protein resides in the nucleus. The protein is Probable inactive lysine-specific demethylase JMJ19 of Arabidopsis thaliana (Mouse-ear cress).